We begin with the raw amino-acid sequence, 386 residues long: Succinate--CoA ligase [ADP-forming] subunit beta (386 aa).

An ATP-grasp domain is found at 9-244; it reads KAVLRSYGVS…LDEEDSKEIE (236 aa). ATP is bound by residues Lys-46, 53–55, Glu-99, Cys-102, and Glu-107; that span reads GRG. Mg(2+)-binding residues include Asn-199 and Asp-213. Substrate-binding positions include Asn-264 and 321-323; that span reads GIM.

The protein belongs to the succinate/malate CoA ligase beta subunit family. Heterotetramer of two alpha and two beta subunits. It depends on Mg(2+) as a cofactor.

The catalysed reaction is succinate + ATP + CoA = succinyl-CoA + ADP + phosphate. It carries out the reaction GTP + succinate + CoA = succinyl-CoA + GDP + phosphate. Its pathway is carbohydrate metabolism; tricarboxylic acid cycle; succinate from succinyl-CoA (ligase route): step 1/1. In terms of biological role, succinyl-CoA synthetase functions in the citric acid cycle (TCA), coupling the hydrolysis of succinyl-CoA to the synthesis of either ATP or GTP and thus represents the only step of substrate-level phosphorylation in the TCA. The beta subunit provides nucleotide specificity of the enzyme and binds the substrate succinate, while the binding sites for coenzyme A and phosphate are found in the alpha subunit. The chain is Succinate--CoA ligase [ADP-forming] subunit beta from Bacillus cereus (strain B4264).